Here is a 148-residue protein sequence, read N- to C-terminus: Cytochrome c oxidase subunit 6, mitochondrial (148 aa).

The transit peptide at 1-40 (MASFFRTAVRGPSAGLFRAVARPQPIAARVSLFSTSSRFR) directs the protein to the mitochondrion.

It belongs to the cytochrome c oxidase subunit 5A family. Component of the cytochrome c oxidase (complex IV, CIV), a multisubunit enzyme composed of 11 subunits. The complex is composed of a catalytic core of 3 subunits Cox1, Cox2 and Cox3, encoded in the mitochondrial DNA, and 8 supernumerary subunits Cox4, Cox5a/Cox5, Cox6, Cox7, Cox8, Cox7a/Cox9, Cox6b/Cox12 and Cox6a/Cox13, which are encoded in the nuclear genome. The complex exists as a monomer or a dimer and forms respiratory supercomplexes (SCs) in the inner mitochondrial membrane with NADH-ubiquinone oxidoreductase (complex I, CI) and ubiquinol-cytochrome c oxidoreductase (cytochrome b-c1 complex, complex III, CIII), resulting in various different assemblies (supercomplexes I(1)IV(1), I(1)III(3)IV(2), III(2)IV(1) and III(2)IV(2) as well as larger supercomplexes of compositions like I(1)III(2)IV(5-6)).

The protein localises to the mitochondrion inner membrane. The protein operates within energy metabolism; oxidative phosphorylation. In terms of biological role, component of the cytochrome c oxidase, the last enzyme in the mitochondrial electron transport chain which drives oxidative phosphorylation. The respiratory chain contains 3 multisubunit complexes succinate dehydrogenase (complex II, CII), ubiquinol-cytochrome c oxidoreductase (cytochrome b-c1 complex, complex III, CIII) and cytochrome c oxidase (complex IV, CIV), that cooperate to transfer electrons derived from NADH and succinate to molecular oxygen, creating an electrochemical gradient over the inner membrane that drives transmembrane transport and the ATP synthase. Cytochrome c oxidase is the component of the respiratory chain that catalyzes the reduction of oxygen to water. Electrons originating from reduced cytochrome c in the intermembrane space (IMS) are transferred via the dinuclear copper A center (CU(A)) of Cox2 and heme A of Cox1 to the active site in Cox1, a binuclear center (BNC) formed by heme A3 and copper B (CU(B)). The BNC reduces molecular oxygen to 2 water molecules using 4 electrons from cytochrome c in the IMS and 4 protons from the mitochondrial matrix. The polypeptide is Cytochrome c oxidase subunit 6, mitochondrial (cox-6) (Neurospora crassa (strain ATCC 24698 / 74-OR23-1A / CBS 708.71 / DSM 1257 / FGSC 987)).